Reading from the N-terminus, the 386-residue chain is 8-amino-7-oxononanoate synthase (386 aa).

Arginine 23 contributes to the substrate binding site. Pyridoxal 5'-phosphate is bound at residue 110–111 (GY). A substrate-binding site is contributed by histidine 135. Serine 181, histidine 209, and threonine 236 together coordinate pyridoxal 5'-phosphate. Lysine 239 is modified (N6-(pyridoxal phosphate)lysine). A substrate-binding site is contributed by threonine 354.

This sequence belongs to the class-II pyridoxal-phosphate-dependent aminotransferase family. BioF subfamily. Homodimer. The cofactor is pyridoxal 5'-phosphate.

It catalyses the reaction 6-carboxyhexanoyl-[ACP] + L-alanine + H(+) = (8S)-8-amino-7-oxononanoate + holo-[ACP] + CO2. Its pathway is cofactor biosynthesis; biotin biosynthesis. Functionally, catalyzes the decarboxylative condensation of pimeloyl-[acyl-carrier protein] and L-alanine to produce 8-amino-7-oxononanoate (AON), [acyl-carrier protein], and carbon dioxide. This Thiobacillus denitrificans (strain ATCC 25259 / T1) protein is 8-amino-7-oxononanoate synthase.